The sequence spans 115 residues: T cell receptor beta variable 16 (115 aa).

An N-terminal signal peptide occupies residues 1-20 (MSPIFTCITILCLLAAGSPG). Positions 21–115 (EEVAQTPKHL…SAVYFCASSQ (95 aa)) constitute an Ig-like domain. Residues cysteine 42 and cysteine 111 are joined by a disulfide bond.

Alpha-beta TR is a heterodimer composed of an alpha and beta chain; disulfide-linked. The alpha-beta TR is associated with the transmembrane signaling CD3 coreceptor proteins to form the TR-CD3 (TcR or TCR). The assembly of alpha-beta TR heterodimers with CD3 occurs in the endoplasmic reticulum where a single alpha-beta TR heterodimer associates with one CD3D-CD3E heterodimer, one CD3G-CD3E heterodimer and one CD247 homodimer forming a stable octameric structure. CD3D-CD3E and CD3G-CD3E heterodimers preferentially associate with TR alpha and TR beta chains, respectively. The association of the CD247 homodimer is the last step of TcR assembly in the endoplasmic reticulum and is required for transport to the cell surface.

It is found in the cell membrane. Functionally, v region of the variable domain of T cell receptor (TR) beta chain that participates in the antigen recognition. Alpha-beta T cell receptors are antigen specific receptors which are essential to the immune response and are present on the cell surface of T lymphocytes. Recognize peptide-major histocompatibility (MH) (pMH) complexes that are displayed by antigen presenting cells (APC), a prerequisite for efficient T cell adaptive immunity against pathogens. Binding of alpha-beta TR to pMH complex initiates TR-CD3 clustering on the cell surface and intracellular activation of LCK that phosphorylates the ITAM motifs of CD3G, CD3D, CD3E and CD247 enabling the recruitment of ZAP70. In turn ZAP70 phosphorylates LAT, which recruits numerous signaling molecules to form the LAT signalosome. The LAT signalosome propagates signal branching to three major signaling pathways, the calcium, the mitogen-activated protein kinase (MAPK) kinase and the nuclear factor NF-kappa-B (NF-kB) pathways, leading to the mobilization of transcription factors that are critical for gene expression and essential for T cell growth and differentiation. The T cell repertoire is generated in the thymus, by V-(D)-J rearrangement. This repertoire is then shaped by intrathymic selection events to generate a peripheral T cell pool of self-MH restricted, non-autoaggressive T cells. Post-thymic interaction of alpha-beta TR with the pMH complexes shapes TR structural and functional avidity. The chain is T cell receptor beta variable 16 from Homo sapiens (Human).